The primary structure comprises 362 residues: Isopentenyl-diphosphate delta-isomerase (362 aa).

Substrate is bound at residue 5–6 (RK). FMN contacts are provided by residues 63–65 (AMT), serine 93, and asparagine 122. Glutamine 152 is a binding site for substrate. Position 153 (glutamate 153) interacts with Mg(2+). FMN is bound by residues lysine 184, threonine 214, 259–261 (GIR), and 280–281 (AG).

The protein belongs to the IPP isomerase type 2 family. As to quaternary structure, homooctamer. Dimer of tetramers. Requires FMN as cofactor. The cofactor is NADPH. Mg(2+) serves as cofactor.

It is found in the cytoplasm. The enzyme catalyses isopentenyl diphosphate = dimethylallyl diphosphate. In terms of biological role, involved in the biosynthesis of isoprenoids. Catalyzes the 1,3-allylic rearrangement of the homoallylic substrate isopentenyl (IPP) to its allylic isomer, dimethylallyl diphosphate (DMAPP). This Nocardia farcinica (strain IFM 10152) protein is Isopentenyl-diphosphate delta-isomerase.